A 326-amino-acid chain; its full sequence is Aspartate--ammonia ligase (326 aa).

Belongs to the class-II aminoacyl-tRNA synthetase family. AsnA subfamily.

The protein localises to the cytoplasm. The catalysed reaction is L-aspartate + NH4(+) + ATP = L-asparagine + AMP + diphosphate + H(+). The protein operates within amino-acid biosynthesis; L-asparagine biosynthesis; L-asparagine from L-aspartate (ammonia route): step 1/1. The chain is Aspartate--ammonia ligase from Malacoplasma penetrans (strain HF-2) (Mycoplasma penetrans).